Reading from the N-terminus, the 386-residue chain is S-adenosylmethionine synthase (386 aa).

His-16 contributes to the ATP binding site. Asp-18 serves as a coordination point for Mg(2+). Glu-44 is a K(+) binding site. Glu-57 and Gln-100 together coordinate L-methionine. The flexible loop stretch occupies residues 100–110 (QSPDINQGVDQ). ATP is bound by residues 164 to 166 (DGK), 230 to 231 (RF), Asp-239, 245 to 246 (RK), Ala-262, and Lys-266. L-methionine is bound at residue Asp-239. Position 270 (Lys-270) interacts with L-methionine.

Belongs to the AdoMet synthase family. As to quaternary structure, homotetramer; dimer of dimers. The cofactor is Mg(2+). K(+) serves as cofactor.

The protein localises to the cytoplasm. The catalysed reaction is L-methionine + ATP + H2O = S-adenosyl-L-methionine + phosphate + diphosphate. Its pathway is amino-acid biosynthesis; S-adenosyl-L-methionine biosynthesis; S-adenosyl-L-methionine from L-methionine: step 1/1. Its function is as follows. Catalyzes the formation of S-adenosylmethionine (AdoMet) from methionine and ATP. The overall synthetic reaction is composed of two sequential steps, AdoMet formation and the subsequent tripolyphosphate hydrolysis which occurs prior to release of AdoMet from the enzyme. This chain is S-adenosylmethionine synthase, found in Nitratiruptor sp. (strain SB155-2).